The primary structure comprises 88 residues: Sigma-conotoxin GVIIIA (88 aa).

The N-terminal stretch at methionine 1–serine 20 is a signal peptide. Positions leucine 21 to arginine 46 are excised as a propeptide. Position 55 is a 4-hydroxyproline (proline 55). Tryptophan 80 carries the 6'-bromotryptophan modification. At serine 87 the chain carries Serine amide.

This sequence belongs to the conotoxin S superfamily. Contains 5 disulfide bonds. As to expression, expressed by the venom duct.

Its subcellular location is the secreted. In terms of biological role, sigma-conotoxins bind and inhibit serotonin-gated ion channels. This peptide selectively and reversibly inhibits 5-hydroxytryptamine 3 receptor (HTR3A) through competitive antagonism (IC(50)=53-86.8 nM). The sequence is that of Sigma-conotoxin GVIIIA from Conus geographus (Geography cone).